The chain runs to 283 residues: Circadian clock oscillator protein KaiA (283 aa).

The interval 3 to 133 (QSTALTICGL…VKLCPGCAVP (131 aa)) is psR domain, binds oxidized quinones. Positions 3–163 (QSTALTICGL…RLSQKLKERL (161 aa)) constitute a KaiA N-terminal domain. Residues 164 to 172 (GYLGVYYKR) are flexible linker. The KaiA C-terminal domain maps to 173–281 (DTAFFFRRMS…CEMYRRSIPR (109 aa)).

Homodimer. The KaiABC complex composition changes during the circadian cycle to control KaiC phosphorylation. Complexes KaiC(6), KaiA(2-4):KaiC(6), KaiB(6):KaiC(6) and KaiC(6):KaiB(6):KaiA(12) are among the most important forms, many form cooperatively. KaiA and CikA bind to the same region of the KaiB(fs) form and therefore compete.

Key component of the KaiABC oscillator complex, which constitutes the main circadian regulator in cyanobacteria. Complex composition changes during the circadian cycle to control KaiC phosphorylation. KaiA stimulates KaiC autophosphorylation, while KaiB sequesters KaiA, leading to KaiC autodephosphorylation. KaiA binding to the KaiC CII domain during the subjective day yields KaiA(2-4):KaiC(6) complexes which stimulate KaiC autophosphorylation. Phospho-Ser-431 KaiC accumulation triggers binding of KaiB during the subjective night to form the KaiB(6):KaiC(6) complex, leading to changes in the output regulators CikA and SasA. KaiB(6):KaiC(6) formation exposes a site for KaiA binding on KaiB that sequesters KaiA from KaiC's CII domain, making the KaiC(6):KaiB(6):KaiA(12) complex resulting in KaiC autodephosphorylation. Complete dephosphorylation of KaiC leads to dissociation of KaiA(2):KaiB(1), completing 1 cycle of the Kai oscillator. Its function is as follows. Binds oxidized quinones via the N-terminal PsR domain, allowing it to sense redox changes and possibly mediate clock input. The protein is Circadian clock oscillator protein KaiA of Thermostichus vulcanus (Synechococcus vulcanus).